Here is a 1784-residue protein sequence, read N- to C-terminus: Histone acetyltransferase KAT6B (1784 aa).

Positions 1-77 constitute an SAMD1-like winged helix (WH) domain; it reads MVKLANPLYT…LASYKDPDNP (77 aa). The tract at residues 72-98 is disordered; the sequence is KDPDNPGRFSSVKPGTFPKSTKESRGS. The H15 domain occupies 103–176; it reads RNVDWNKLLR…KDGPQYRVNY (74 aa). PHD-type zinc fingers lie at residues 213–272 and 269–320; these read IPIC…CKTC and CKTC…CRPK. A Phosphoserine modification is found at Ser-355. Residues 361 to 425 form a negatively regulates HAT activity region; it reads GSMNAFTGRG…ECESGVEDCG (65 aa). Lys-381 participates in a covalent cross-link: Glycyl lysine isopeptide (Lys-Gly) (interchain with G-Cter in SUMO2). The MYST-type HAT domain occupies 423 to 697; that stretch reads DCGRYPSVIE…LDPDSLRWTP (275 aa). A catalytic region spans residues 426 to 716; that stretch reads RYPSVIEFGK…EEEREAEKEA (291 aa). Residues 456 to 481 form a C2HC MYST-type zinc finger; sequence LYLCEFCLKYMKSKNILLRHSKKCGW. The segment at 460-716 is interaction with BRPF1; it reads EFCLKYMKSK…EEEREAEKEA (257 aa). Residue Lys-523 is modified to N6-acetyllysine; by autocatalysis. Residues 564-568 and 573-579 each bind acetyl-CoA; these read SCIMI and QRQGFGR. Glu-599 functions as the Proton donor/acceptor in the catalytic mechanism. Ser-603 contributes to the acetyl-CoA binding site. 4 disordered regions span residues 730–884, 904–1163, 1195–1273, and 1291–1330; these read EQEV…RPMP, RKAF…FKEV, SCNS…FQDC, and QSPQ…SPSV. Over residues 733–751 the composition is skewed to polar residues; sequence VLSTRANSRQSPAKVQSKN. N6-acetyllysine is present on residues Lys-746, Lys-750, and Lys-752. Ser-756 carries the post-translational modification Phosphoserine. Positions 777 to 819 are enriched in acidic residues; that stretch reads SEEEEEEEEDEEEEDEEEEEEEEEDEEEEEEEEEEEEEEEEEN. Residues 820 to 831 are compositionally biased toward polar residues; sequence IQSSPPRLTKPQ. Basic residues predominate over residues 835-854; sequence IKRKRPFVLKKKRGRKRRRI. Low complexity predominate over residues 856–869; it reads SSVTTETISETTEV. Over residues 904 to 914 the composition is skewed to basic residues; that stretch reads RKAFQHQPGKK. Basic and acidic residues-rich tracts occupy residues 938–957 and 1055–1064; these read MNDD…EPLK and EKPEDDLIKP. The span at 1065–1087 shows a compositional bias: acidic residues; sequence EEEEEEEEEEEEEEGEEEEEEGG. 2 stretches are compositionally biased toward basic and acidic residues: residues 1088-1101 and 1107-1118; these read NVEK…SQEK and SPEKEDSARLDD. Positions 1119-1128 are enriched in acidic residues; that stretch reads HEEEEEEDEE. Residues 1144–1163 show a composition bias toward basic and acidic residues; that stretch reads HMESAEVEKEELPRESFKEV. Positions 1209–1218 are enriched in acidic residues; it reads AVPESDEEPP. Residues 1224-1240 show a composition bias toward basic and acidic residues; that stretch reads QKQDQKNSKEVDTEFKE. 2 stretches are compositionally biased toward polar residues: residues 1251–1263 and 1291–1302; these read ETVQ…TQES and QSPQIATTLDDC. The interaction with RUNX1 and RUNX2 stretch occupies residues 1271–1784; that stretch reads QDCAETQEAC…QSLNGSYMRR (514 aa). The segment covering 1305–1322 has biased composition (low complexity); the sequence is SDHSSPVSSVHSHPGQSV.

Belongs to the MYST (SAS/MOZ) family. As to quaternary structure, component of the MOZ/MORF complex composed at least of ING5, KAT6A, KAT6B, MEAF6 and one of BRPF1, BRD1/BRPF2 and BRPF3. Interacts with RUNX1 and RUNX2. In terms of processing, autoacetylation at Lys-523 is required for proper function.

Its subcellular location is the nucleus. The catalysed reaction is L-lysyl-[protein] + acetyl-CoA = N(6)-acetyl-L-lysyl-[protein] + CoA + H(+). In terms of biological role, histone acetyltransferase which may be involved in both positive and negative regulation of transcription. Required for RUNX2-dependent transcriptional activation. May be involved in cerebral cortex development. Component of the MOZ/MORF complex which has a histone H3 acetyltransferase activity. The protein is Histone acetyltransferase KAT6B (KAT6B) of Macaca fascicularis (Crab-eating macaque).